Here is a 401-residue protein sequence, read N- to C-terminus: Argininosuccinate synthase (401 aa).

Residues A7–S15 and A34 each bind ATP. L-citrulline is bound by residues Y85 and S90. G115 is a binding site for ATP. Residues T117, N121, and D122 each contribute to the L-aspartate site. N121 is a binding site for L-citrulline. Residues R125, S174, S183, E259, and Y271 each contribute to the L-citrulline site.

The protein belongs to the argininosuccinate synthase family. Type 1 subfamily. In terms of assembly, homotetramer.

Its subcellular location is the cytoplasm. It catalyses the reaction L-citrulline + L-aspartate + ATP = 2-(N(omega)-L-arginino)succinate + AMP + diphosphate + H(+). It functions in the pathway amino-acid biosynthesis; L-arginine biosynthesis; L-arginine from L-ornithine and carbamoyl phosphate: step 2/3. This chain is Argininosuccinate synthase, found in Pelotomaculum thermopropionicum (strain DSM 13744 / JCM 10971 / SI).